The following is a 278-amino-acid chain: Asnovolin E/Chermesin D methyltransferase nvfJ (278 aa).

Residues 125–126, 152–153, and 153–154 contribute to the S-adenosyl-L-methionine site; these read DL, NI, and IL.

This sequence belongs to the class I-like SAM-binding methyltransferase superfamily. In terms of assembly, homodimer.

It carries out the reaction chermesin D + S-adenosyl-L-methionine = chermesin D methyl ester + S-adenosyl-L-homocysteine. The catalysed reaction is asnovolin I + S-adenosyl-L-methionine = asnovolin K + S-adenosyl-L-homocysteine. It participates in secondary metabolite biosynthesis; terpenoid biosynthesis. In terms of biological role, methyltransferase; part of the gene cluster that mediates the biosynthesis of novofumigatonin, a heavily oxygenated meroterpenoid containing a unique orthoester moiety. The first step of the pathway is the synthesis of 3,5-dimethylorsellinic acid (DMOA) by the polyketide synthase nvfA via condensation of one acetyl-CoA starter unit with 3 malonyl-CoA units and 2 methylations. DMOA is then converted to farnesyl-DMOA by the farnesyltransferase nvfB. Epoxydation by FAD-dependent monooxygenase nvfK, followed by a protonation-initiated cyclization catalyzed by the terpene cyclase nvfL leads to the production of asnavolin H. The short chain dehydrogenase nvfC then as a 3-OH dehydrogenase of asnovolin H to yield chemesin D. There are two branches to synthesize asnovolin A from chemesin D. In one branch, chemesin D undergoes Baeyer-Villiger oxidation by nvfH, methylation by nvfJ, and enoyl reduction by the nvfM D enoylreductase that reduces the double bond between C-5'and C-6', to form respectively asnovolin I, asnovolin K, and asnovolin A. In the other branch, the methylation precedes the Baeyer-Villiger oxidation and the enoyl reduction to yield asnovolin A via the asnovolin J intermediate. Asnovolin A is further converted to fumigatonoid A by the Fe(II)/2-oxoglutarate-dependent dioxygenase nvfI that catalyzes an endoperoxidation reaction. The alpha/beta hydrolase nvfD then acts as an epimerase that converts fumigatonoid A to its C-5' epimer, which then undergoes spontaneous or nvfD-catalyzed lactonization. The following step utilizes the ketoreductase nvfG to produce fumigatonoid B. The dioxygenase nvfE further converts fumigatonoid B into fumigatonoid C. Finally the Fe(II)/2-oxoglutarate-dependent dioxygenase nvfF catalyzes two rounds of oxidation to transform fumigatonoid C into the end product, novofumigatonin A. This chain is Asnovolin E/Chermesin D methyltransferase nvfJ, found in Aspergillus novofumigatus (strain IBT 16806).